Reading from the N-terminus, the 63-residue chain is Large ribosomal subunit protein bL32 (63 aa).

Residues 1-18 (MAHPKRRISRSRRDKRRA) are compositionally biased toward basic residues. A disordered region spans residues 1–27 (MAHPKRRISRSRRDKRRAQYNAKTKAP).

This sequence belongs to the bacterial ribosomal protein bL32 family.

This Chloroherpeton thalassium (strain ATCC 35110 / GB-78) protein is Large ribosomal subunit protein bL32.